We begin with the raw amino-acid sequence, 146 residues long: Hemoglobin subunit beta (146 aa).

At V1 the chain carries N-acetylvaline. The region spanning H2–H146 is the Globin domain. T12 is modified (phosphothreonine). S44 is modified (phosphoserine). Residue K59 is modified to N6-acetyllysine. Residue H63 coordinates heme b. An N6-acetyllysine modification is found at K82. H92 serves as a coordination point for heme b. S-nitrosocysteine is present on C93. K144 is modified (N6-acetyllysine).

It belongs to the globin family. Heterotetramer of two alpha chains and two beta chains. Red blood cells.

Its function is as follows. Involved in oxygen transport from the lung to the various peripheral tissues. This is Hemoglobin subunit beta (HBB) from Nasua nasua (Ring-tailed coati).